A 217-amino-acid chain; its full sequence is Orotidine 5'-phosphate decarboxylase (217 aa).

Residues Asp-14, Lys-36, 64-73, Ser-120, 172-182, Gly-197, and Arg-198 each bind substrate; these read DFKVADIPST and PGVGAQGGNLS. Catalysis depends on Lys-66, which acts as the Proton donor.

Belongs to the OMP decarboxylase family. Type 1 subfamily. Homodimer.

The enzyme catalyses orotidine 5'-phosphate + H(+) = UMP + CO2. It functions in the pathway pyrimidine metabolism; UMP biosynthesis via de novo pathway; UMP from orotate: step 2/2. Catalyzes the decarboxylation of orotidine 5'-monophosphate (OMP) to uridine 5'-monophosphate (UMP). The chain is Orotidine 5'-phosphate decarboxylase from Methanococcus maripaludis (strain DSM 14266 / JCM 13030 / NBRC 101832 / S2 / LL).